The following is a 271-amino-acid chain: Ribosomal RNA small subunit methyltransferase A (271 aa).

S-adenosyl-L-methionine contacts are provided by H11, L13, G38, E58, D86, and N101.

The protein belongs to the class I-like SAM-binding methyltransferase superfamily. rRNA adenine N(6)-methyltransferase family. RsmA subfamily.

The protein localises to the cytoplasm. The enzyme catalyses adenosine(1518)/adenosine(1519) in 16S rRNA + 4 S-adenosyl-L-methionine = N(6)-dimethyladenosine(1518)/N(6)-dimethyladenosine(1519) in 16S rRNA + 4 S-adenosyl-L-homocysteine + 4 H(+). Functionally, specifically dimethylates two adjacent adenosines (A1518 and A1519) in the loop of a conserved hairpin near the 3'-end of 16S rRNA in the 30S particle. May play a critical role in biogenesis of 30S subunits. The polypeptide is Ribosomal RNA small subunit methyltransferase A (Helicobacter pylori (strain ATCC 700392 / 26695) (Campylobacter pylori)).